A 262-amino-acid chain; its full sequence is E3 ubiquitin-protein ligase NEURL3 (262 aa).

The region spanning 17–173 is the NHR domain; it reads ALRFHAEAKG…TTKAIELLDP (157 aa). Residues 202 to 241 form an RING-type zinc finger; the sequence is CAICFYHAANTRLVPCGHTYFCRYCAWRVFSDTAKCPVCR.

In terms of assembly, (Microbial infection) Interacts with hepatitis C virus protein E1; this interaction prevents E1 interaction with E2 and subsequently inhibits viral infection.

The protein localises to the cytoplasm. The catalysed reaction is S-ubiquitinyl-[E2 ubiquitin-conjugating enzyme]-L-cysteine + [acceptor protein]-L-lysine = [E2 ubiquitin-conjugating enzyme]-L-cysteine + N(6)-ubiquitinyl-[acceptor protein]-L-lysine.. Its pathway is protein modification; protein ubiquitination. In terms of biological role, E3 ubiquitin-protein ligase that plays a role in various biological processes such as lung development or innate immunity. Seems to utilize UBE2E1. Promotes innate antiviral response by catalyzing 'Lys-63'-linked ubiquitination of IRF7. Also inhibits hepatitis C virus assembly by directly binding to viral E1 envelope glycoprotein to disrupt its interaction with E2. Plays an essential role in TLR4-mediated activation of MAPK pathways by promoting 'Lys-48'-linked polyubiquitination of the phosphatase DUSP1/MKP1. This chain is E3 ubiquitin-protein ligase NEURL3 (NEURL3), found in Homo sapiens (Human).